Reading from the N-terminus, the 125-residue chain is Large ribosomal subunit protein bL12 (125 aa).

It belongs to the bacterial ribosomal protein bL12 family. In terms of assembly, homodimer. Part of the ribosomal stalk of the 50S ribosomal subunit. Forms a multimeric L10(L12)X complex, where L10 forms an elongated spine to which 2 to 4 L12 dimers bind in a sequential fashion. Binds GTP-bound translation factors.

Forms part of the ribosomal stalk which helps the ribosome interact with GTP-bound translation factors. Is thus essential for accurate translation. The chain is Large ribosomal subunit protein bL12 from Syntrophomonas wolfei subsp. wolfei (strain DSM 2245B / Goettingen).